Consider the following 443-residue polypeptide: Glycerol-3-phosphate acyltransferase 3-like (443 aa).

The next 3 membrane-spanning stretches (helical) occupy residues 15 to 35, 146 to 166, and 170 to 190; these read WFSC…SLGI, ISLR…CILL, and ITLT…VGFL. Residues 238-243 carry the HXXXXD motif motif; the sequence is HTSPID. Residues 358 to 378 traverse the membrane as a helical segment; that stretch reads IMSYLLRMMTSWAIVCNVWYL.

It belongs to the 1-acyl-sn-glycerol-3-phosphate acyltransferase family.

It is found in the endoplasmic reticulum membrane. The catalysed reaction is sn-glycerol 3-phosphate + an acyl-CoA = a 1-acyl-sn-glycero-3-phosphate + CoA. It carries out the reaction a 1-acyl-sn-glycero-3-phosphate + an acyl-CoA = a 1,2-diacyl-sn-glycero-3-phosphate + CoA. The protein operates within glycerolipid metabolism; triacylglycerol biosynthesis. Its pathway is phospholipid metabolism; CDP-diacylglycerol biosynthesis; CDP-diacylglycerol from sn-glycerol 3-phosphate: step 1/3. May transfer the acyl-group from acyl-coA to the sn-1 position of glycerol-3-phosphate, an essential step in glycerolipid biosynthesis. Also transfers the acyl-group from acyl-coA to the sn-2 position of 1-acyl-sn-glycerol-3-phosphate (lysophosphatidic acid, or LPA), forming 1,2-diacyl-sn-glycerol-3-phosphate (phosphatidic acid, or PA). This Danio rerio (Zebrafish) protein is Glycerol-3-phosphate acyltransferase 3-like (agpat9l).